We begin with the raw amino-acid sequence, 574 residues long: Membrane protein insertase YidC (574 aa).

Residues 6 to 26 (VFLIFAWLMVAALLWMEWGKE) traverse the membrane as a helical segment. Positions 65 to 85 (QAGAPGKVPATSTTTATPAAA) are disordered. A run of 5 helical transmembrane segments spans residues 350–370 (VIDY…FWVL), 376–396 (FLHN…LVLY), 447–467 (GGCL…WVLV), 491–511 (FILP…TPTP), and 525–545 (PLVF…YWVV).

It belongs to the OXA1/ALB3/YidC family. Type 1 subfamily. As to quaternary structure, interacts with the Sec translocase complex via SecD. Specifically interacts with transmembrane segments of nascent integral membrane proteins during membrane integration.

It is found in the cell inner membrane. Required for the insertion and/or proper folding and/or complex formation of integral membrane proteins into the membrane. Involved in integration of membrane proteins that insert both dependently and independently of the Sec translocase complex, as well as at least some lipoproteins. Aids folding of multispanning membrane proteins. The sequence is that of Membrane protein insertase YidC from Xanthomonas oryzae pv. oryzae (strain PXO99A).